The following is a 376-amino-acid chain: UPF0754 membrane protein BLi01057/BL02871 (376 aa).

2 consecutive transmembrane segments (helical) span residues 1–21 and 356–376; these read MYVF…GAVT and YLGG…VILI.

It belongs to the UPF0754 family.

It localises to the cell membrane. The chain is UPF0754 membrane protein BLi01057/BL02871 from Bacillus licheniformis (strain ATCC 14580 / DSM 13 / JCM 2505 / CCUG 7422 / NBRC 12200 / NCIMB 9375 / NCTC 10341 / NRRL NRS-1264 / Gibson 46).